Consider the following 243-residue polypeptide: Carboxy-S-adenosyl-L-methionine synthase (243 aa).

S-adenosyl-L-methionine-binding positions include tyrosine 40, 65-67 (GCS), 90-91 (DN), 118-119 (DI), asparagine 133, and arginine 200.

The protein belongs to the class I-like SAM-binding methyltransferase superfamily. Cx-SAM synthase family. Homodimer.

The enzyme catalyses prephenate + S-adenosyl-L-methionine = carboxy-S-adenosyl-L-methionine + 3-phenylpyruvate + H2O. Functionally, catalyzes the conversion of S-adenosyl-L-methionine (SAM) to carboxy-S-adenosyl-L-methionine (Cx-SAM). The polypeptide is Carboxy-S-adenosyl-L-methionine synthase (Shewanella sp. (strain MR-7)).